The sequence spans 73 residues: U-scoloptoxin(15)-Sm3a (73 aa).

The signal sequence occupies residues 1 to 23 (MERKVFLLLFVIVLLTLPGFMSA).

Belongs to the scoloptoxin-15 family. Post-translationally, contains 2 disulfide bonds. As to expression, expressed by the venom gland.

The protein resides in the secreted. This chain is U-scoloptoxin(15)-Sm3a, found in Scolopendra morsitans (Tanzanian blue ringleg centipede).